The sequence spans 507 residues: Maturase K (507 aa).

It belongs to the intron maturase 2 family. MatK subfamily.

It localises to the plastid. The protein localises to the chloroplast. In terms of biological role, usually encoded in the trnK tRNA gene intron. Probably assists in splicing its own and other chloroplast group II introns. In Fagopyrum tataricum (Tartarian buckwheat), this protein is Maturase K.